The chain runs to 321 residues: Methionyl-tRNA formyltransferase (321 aa).

Position 112–115 (112–115) interacts with (6S)-5,6,7,8-tetrahydrofolate; it reads GLLP.

Belongs to the Fmt family.

It catalyses the reaction L-methionyl-tRNA(fMet) + (6R)-10-formyltetrahydrofolate = N-formyl-L-methionyl-tRNA(fMet) + (6S)-5,6,7,8-tetrahydrofolate + H(+). Its function is as follows. Attaches a formyl group to the free amino group of methionyl-tRNA(fMet). The formyl group appears to play a dual role in the initiator identity of N-formylmethionyl-tRNA by promoting its recognition by IF2 and preventing the misappropriation of this tRNA by the elongation apparatus. The chain is Methionyl-tRNA formyltransferase from Chlamydia caviae (strain ATCC VR-813 / DSM 19441 / 03DC25 / GPIC) (Chlamydophila caviae).